We begin with the raw amino-acid sequence, 762 residues long: Transcription factor kpeA (762 aa).

A disordered region spans residues 267–361; sequence FDHTSHGSQS…PLKPDQRKQA (95 aa). Low complexity predominate over residues 294 to 312; sequence KKPSSPTRSTGSSSSTSPP. The segment at residues 370–401 is a DNA-binding region (zn(2)-C6 fungal-type); the sequence is CLRCKFLKKTCDKGEPCAGCQPSHARLWQVPC.

The protein localises to the nucleus. In terms of biological role, transcription factor that regulates conidiation as well as kojic acid production, likely by negatively controlling kojR and kojA expression. The chain is Transcription factor kpeA from Aspergillus oryzae (strain ATCC 42149 / RIB 40) (Yellow koji mold).